We begin with the raw amino-acid sequence, 193 residues long: Xanthine phosphoribosyltransferase (193 aa).

The xanthine site is built by Leu20 and Thr27. 128 to 132 is a 5-phospho-alpha-D-ribose 1-diphosphate binding site; sequence ANGQA. A xanthine-binding site is contributed by Lys156.

This sequence belongs to the purine/pyrimidine phosphoribosyltransferase family. Xpt subfamily. As to quaternary structure, homodimer.

It is found in the cytoplasm. It carries out the reaction XMP + diphosphate = xanthine + 5-phospho-alpha-D-ribose 1-diphosphate. It participates in purine metabolism; XMP biosynthesis via salvage pathway; XMP from xanthine: step 1/1. Converts the preformed base xanthine, a product of nucleic acid breakdown, to xanthosine 5'-monophosphate (XMP), so it can be reused for RNA or DNA synthesis. The sequence is that of Xanthine phosphoribosyltransferase from Streptococcus gordonii (strain Challis / ATCC 35105 / BCRC 15272 / CH1 / DL1 / V288).